Consider the following 1651-residue polypeptide: Roundabout homolog 1 (1651 aa).

An N-terminal signal peptide occupies residues 1–25; that stretch reads MKWKHLPLLVMISLLTLSKKHLLLA. Residues 26–897 lie on the Extracellular side of the membrane; it reads QLIPDPEDLE…QQISDVVKQP (872 aa). The disordered stretch occupies residues 31 to 66; that stretch reads PEDLERGNDNGTPAPTSDNDDNSLGYTGSRLRQEDF. Residues 39 to 56 are compositionally biased toward polar residues; the sequence is DNGTPAPTSDNDDNSLGY. 5 consecutive Ig-like C2-type domains span residues 68–164, 170–257, 262–346, 351–446, and 455–541; these read PRIV…ASLE, DDFR…ADVT, PSFV…ATLT, PHFV…LEVT, and PVIR…AYIE. An intrachain disulfide couples C89 to C147. N-linked (GlcNAc...) asparagine glycosylation occurs at N160. Intrachain disulfides connect C191-C240, C283-C330, and C372-C428. The N-linked (GlcNAc...) asparagine glycan is linked to N463. Cysteines 476 and 525 form a disulfide. Fibronectin type-III domains follow at residues 563-657, 676-773, and 778-874; these read APSK…TQDV, VVLH…TLEE, and PPRS…LDSH. Residues N790, N820, and N827 are each glycosylated (N-linked (GlcNAc...) asparagine). The chain crosses the membrane as a helical span at residues 898–918; the sequence is AFIAGIGAACWIILMVFSIWL. Over 919 to 1651 the chain is Cytoplasmic; sequence YRHRKKRNGL…NNEELEETES (733 aa). S940 carries the post-translational modification Phosphoserine. Residue T948 is modified to Phosphothreonine. Y1038 is modified (phosphotyrosine). Position 1055 is a phosphoserine (S1055). Phosphotyrosine is present on Y1073. The segment at 1086 to 1107 is disordered; that stretch reads NMNNGGGDSSEKHWKPPGQQKQ. Y1114 carries the phosphotyrosine modification. Disordered regions lie at residues 1137–1337, 1352–1397, and 1420–1651; these read PYNH…ADME, EQTP…DGSF, and RRQM…ETES. A compositionally biased stretch (low complexity) spans 1147–1163; the sequence is GGSYNSSDRGSSTSGSQ. A compositionally biased stretch (pro residues) spans 1186-1196; that stretch reads LPPPPAHPPPH. At T1240 the chain carries Phosphothreonine. The segment covering 1255 to 1269 has biased composition (polar residues); sequence YSHQSTATLTPSPQE. The span at 1281–1293 shows a compositional bias: basic and acidic residues; sequence DLGHMPHPPDRRR. Residues 1296–1307 show a composition bias toward pro residues; that stretch reads VSPPPPPRPISP. S1297 carries the phosphoserine modification. Residues 1322-1336 show a composition bias toward acidic residues; that stretch reads MDTDAPEEEEDEADM. Low complexity predominate over residues 1384-1397; sequence SSGRSSVSSSDGSF. The span at 1438 to 1451 shows a compositional bias: polar residues; that stretch reads PRPTSPVSTDSNMS. Over residues 1459 to 1470 the composition is skewed to basic residues; the sequence is RPTKKQKHQPGH. Positions 1480-1490 are enriched in pro residues; sequence LPPPPVPPPAI. 2 stretches are compositionally biased toward basic and acidic residues: residues 1516-1541 and 1549-1573; these read ARAD…RQVT and DPRE…RDLP. Polar residues predominate over residues 1592 to 1601; that stretch reads FPTSNNPRDP. Residues 1602-1614 are compositionally biased toward low complexity; it reads SSSSSMSSRGSGS. The segment covering 1642 to 1651 has biased composition (acidic residues); it reads NNEELEETES.

Belongs to the immunoglobulin superfamily. ROBO family. Homodimer. Dimerization is mediated by the extracellular domain and is independent of SLIT liganding. Interacts with SLIT1. Interacts with SLIT2. Interacts with FLRT3. Interacts with MYO9B (via Rho-GAP domain). Post-translationally, ubiquitinated. May be deubiquitinated by USP33. Expressed in embryonal brain and spinal cord.

The protein resides in the cell membrane. It localises to the cell projection. It is found in the axon. The protein localises to the endoplasmic reticulum-Golgi intermediate compartment membrane. Its function is as follows. Receptor for SLIT1 and SLIT2 that mediates cellular responses to molecular guidance cues in cellular migration, including axonal navigation at the ventral midline of the neural tube and projection of axons to different regions during neuronal development. Interaction with the intracellular domain of FLRT3 mediates axon attraction towards cells expressing NTN1. In axon growth cones, the silencing of the attractive effect of NTN1 by SLIT2 may require the formation of a ROBO1-DCC complex. Plays a role in the regulation of cell migration via its interaction with MYO9B; inhibits MYO9B-mediated stimulation of RHOA GTPase activity, and thereby leads to increased levels of active, GTP-bound RHOA. May be required for lung development. In Rattus norvegicus (Rat), this protein is Roundabout homolog 1 (Robo1).